The primary structure comprises 71 residues: 8.6 kDa protein (71 aa).

In Pseudomonas phage Pf1 (Bacteriophage Pf1), this protein is 8.6 kDa protein.